Here is a 309-residue protein sequence, read N- to C-terminus: Ribonuclease Z (309 aa).

Zn(2+) is bound by residues H63, H65, D67, H68, H141, D212, and H270. D67 (proton acceptor) is an active-site residue.

Belongs to the RNase Z family. In terms of assembly, homodimer. Requires Zn(2+) as cofactor.

The enzyme catalyses Endonucleolytic cleavage of RNA, removing extra 3' nucleotides from tRNA precursor, generating 3' termini of tRNAs. A 3'-hydroxy group is left at the tRNA terminus and a 5'-phosphoryl group is left at the trailer molecule.. In terms of biological role, zinc phosphodiesterase, which displays some tRNA 3'-processing endonuclease activity. Probably involved in tRNA maturation, by removing a 3'-trailer from precursor tRNA. The chain is Ribonuclease Z from Lactobacillus johnsonii (strain CNCM I-12250 / La1 / NCC 533).